The sequence spans 575 residues: 5-aminolevulinate synthase, mitochondrial (575 aa).

The N-terminal 55 residues, 1-55, are a transit peptide targeting the mitochondrion; it reads MESITRVSMSVCPFVKSSSAQALRQLSKNSALTSQARQCPFMGAALNAKESTRSY. Substrate is bound by residues Arg124, Ser237, and Lys256. Pyridoxal 5'-phosphate-binding residues include Ser289, His317, and Thr361. The active site involves Lys364. Lys364 bears the N6-(pyridoxal phosphate)lysine mark. Positions 393 and 394 each coordinate pyridoxal 5'-phosphate. Thr479 lines the substrate pocket.

It belongs to the class-II pyridoxal-phosphate-dependent aminotransferase family. In terms of assembly, homodimer. It depends on pyridoxal 5'-phosphate as a cofactor.

Its subcellular location is the mitochondrion matrix. It carries out the reaction succinyl-CoA + glycine + H(+) = 5-aminolevulinate + CO2 + CoA. It participates in porphyrin-containing compound metabolism; protoporphyrin-IX biosynthesis; 5-aminolevulinate from glycine: step 1/1. Functionally, catalyzes the synthesis of 5-aminolevulinate (ALA) from succinyl-CoA and glycine, the first and rate-limiting step in heme biosynthesis. The polypeptide is 5-aminolevulinate synthase, mitochondrial (HEM1) (Debaryomyces hansenii (strain ATCC 36239 / CBS 767 / BCRC 21394 / JCM 1990 / NBRC 0083 / IGC 2968) (Yeast)).